A 201-amino-acid polypeptide reads, in one-letter code: Arachin 25 kDa protein (201 aa).

In terms of assembly, this is one of six apparently different protein chains that constitute the peanut protein arachin.

This is Arachin 25 kDa protein from Arachis hypogaea (Peanut).